Consider the following 443-residue polypeptide: ATP-dependent protease ATPase subunit HslU (443 aa).

ATP contacts are provided by residues Ile-18, 60-65, Asp-256, Glu-321, and Arg-393; that span reads GVGKTE.

This sequence belongs to the ClpX chaperone family. HslU subfamily. A double ring-shaped homohexamer of HslV is capped on each side by a ring-shaped HslU homohexamer. The assembly of the HslU/HslV complex is dependent on binding of ATP.

Its subcellular location is the cytoplasm. Functionally, ATPase subunit of a proteasome-like degradation complex; this subunit has chaperone activity. The binding of ATP and its subsequent hydrolysis by HslU are essential for unfolding of protein substrates subsequently hydrolyzed by HslV. HslU recognizes the N-terminal part of its protein substrates and unfolds these before they are guided to HslV for hydrolysis. The protein is ATP-dependent protease ATPase subunit HslU of Escherichia coli O139:H28 (strain E24377A / ETEC).